The following is a 213-amino-acid chain: Non-structural protein 7b (213 aa).

An N-terminal signal peptide occupies residues 1-15 (MKFVILVLCLSFVNG).

The protein is Non-structural protein 7b of Canis lupus familiaris (Dog).